The sequence spans 142 residues: MANGKYAARKLKQDRQQRRWSDSEYARRERGLGAKSDPLEGAPQGRGIVLEKVGIEAKQPNSAIRKCVRVQLIKNGKQVTAFCPGDGAISFIDEHDEVTIAGIGGAKGRAMGDLSGVNYKVEKVNGVSLIELVRGNAEKPVR.

A disordered region spans residues 1–44; the sequence is MANGKYAARKLKQDRQQRRWSDSEYARRERGLGAKSDPLEGAPQ. Basic and acidic residues predominate over residues 11 to 32; it reads LKQDRQQRRWSDSEYARRERGL.

This sequence belongs to the universal ribosomal protein uS12 family. Part of the 30S ribosomal subunit.

With S4 and S5 plays an important role in translational accuracy. Located at the interface of the 30S and 50S subunits. The protein is Small ribosomal subunit protein uS12 of Haloquadratum walsbyi (strain DSM 16790 / HBSQ001).